We begin with the raw amino-acid sequence, 369 residues long: Homoserine O-succinyltransferase (369 aa).

The disordered stretch occupies residues 1-21; sequence MVRIVPSARRTRAPAKLDGRS. In terms of domain architecture, AB hydrolase-1 spans 86–350; the sequence is VVFVAGGISA…PFGHDAFLKE (265 aa). Positions 92–95 are important for substrate specificity; sequence GISA. Residue S172 is the Nucleophile of the active site. Position 233 (R233) interacts with substrate. Catalysis depends on residues D314 and H344. D345 provides a ligand contact to substrate.

Belongs to the AB hydrolase superfamily. MetX family. In terms of assembly, homodimer.

It localises to the cytoplasm. The catalysed reaction is L-homoserine + succinyl-CoA = O-succinyl-L-homoserine + CoA. The protein operates within amino-acid biosynthesis; L-methionine biosynthesis via de novo pathway; O-succinyl-L-homoserine from L-homoserine: step 1/1. In terms of biological role, transfers a succinyl group from succinyl-CoA to L-homoserine, forming succinyl-L-homoserine. The protein is Homoserine O-succinyltransferase of Xanthomonas campestris pv. campestris (strain ATCC 33913 / DSM 3586 / NCPPB 528 / LMG 568 / P 25).